A 461-amino-acid polypeptide reads, in one-letter code: tRNA modification GTPase MnmE (461 aa).

Positions 27, 89, and 128 each coordinate (6S)-5-formyl-5,6,7,8-tetrahydrofolate. Positions 224–382 (GLATAIVGRP…LENAIEKLFF (159 aa)) constitute a TrmE-type G domain. Asn234 contacts K(+). Residues 234-239 (NVGKSS), 253-259 (TDIAGTT), and 278-281 (DTAG) each bind GTP. Ser238 is a Mg(2+) binding site. K(+)-binding residues include Thr253, Ile255, and Thr258. Thr259 is a binding site for Mg(2+). Residue Lys461 participates in (6S)-5-formyl-5,6,7,8-tetrahydrofolate binding.

The protein belongs to the TRAFAC class TrmE-Era-EngA-EngB-Septin-like GTPase superfamily. TrmE GTPase family. Homodimer. Heterotetramer of two MnmE and two MnmG subunits. K(+) is required as a cofactor.

It is found in the cytoplasm. Its function is as follows. Exhibits a very high intrinsic GTPase hydrolysis rate. Involved in the addition of a carboxymethylaminomethyl (cmnm) group at the wobble position (U34) of certain tRNAs, forming tRNA-cmnm(5)s(2)U34. This is tRNA modification GTPase MnmE from Lactobacillus gasseri (strain ATCC 33323 / DSM 20243 / BCRC 14619 / CIP 102991 / JCM 1131 / KCTC 3163 / NCIMB 11718 / NCTC 13722 / AM63).